We begin with the raw amino-acid sequence, 310 residues long: MFNHVTVLLKETVDGLDIKPGGTYVDCTLGGGGHSSYLLSQLTEGGRLIAFDQDEIAIQNAKEKFSSYGEQFITVKSNFRYLSEKLQELGITEVDGILFDLGVSSPQLDTPERGFSYHHDAPLDMRMDQDAPLTAYDVVNSWSYEQLVRIFFQYGEEKFSKQIARKIEAYRENKAIETTGELVELIKEGIPAPARRTGGHPAKRVFQAIRIAVNDELKVFEEALESAIEMVKPGGRVSVITFHSLEDRICKTTFKRNSTTPQLPPGLPIIPDEFKPKLKLITRKPILPSDIELEENNRARSAKLRIAEKR.

S-adenosyl-L-methionine contacts are provided by residues 32 to 34 (GGH), aspartate 52, phenylalanine 79, aspartate 100, and glutamine 107.

The protein belongs to the methyltransferase superfamily. RsmH family.

The protein localises to the cytoplasm. The enzyme catalyses cytidine(1402) in 16S rRNA + S-adenosyl-L-methionine = N(4)-methylcytidine(1402) in 16S rRNA + S-adenosyl-L-homocysteine + H(+). Specifically methylates the N4 position of cytidine in position 1402 (C1402) of 16S rRNA. In Bacillus cereus (strain ATCC 10987 / NRS 248), this protein is Ribosomal RNA small subunit methyltransferase H.